Reading from the N-terminus, the 245-residue chain is 2,3-bisphosphoglycerate-dependent phosphoglycerate mutase (245 aa).

Substrate contacts are provided by residues 8–15, 21–22, Arg60, 87–90, Lys98, 114–115, and 183–184; these read RHGQSLWN, TG, ERHY, RR, and GN. The active-site Tele-phosphohistidine intermediate is His9. Glu87 (proton donor/acceptor) is an active-site residue.

Belongs to the phosphoglycerate mutase family. BPG-dependent PGAM subfamily.

The catalysed reaction is (2R)-2-phosphoglycerate = (2R)-3-phosphoglycerate. Its pathway is carbohydrate degradation; glycolysis; pyruvate from D-glyceraldehyde 3-phosphate: step 3/5. Its function is as follows. Catalyzes the interconversion of 2-phosphoglycerate and 3-phosphoglycerate. This chain is 2,3-bisphosphoglycerate-dependent phosphoglycerate mutase, found in Bacillus cytotoxicus (strain DSM 22905 / CIP 110041 / 391-98 / NVH 391-98).